The sequence spans 75 residues: Small ribosomal subunit protein eS17 (75 aa).

Belongs to the eukaryotic ribosomal protein eS17 family.

The sequence is that of Small ribosomal subunit protein eS17 from Thermoplasma acidophilum (strain ATCC 25905 / DSM 1728 / JCM 9062 / NBRC 15155 / AMRC-C165).